A 263-amino-acid chain; its full sequence is Peptidoglycan-N-acetylmuramic acid deacetylase PdaA (263 aa).

An N-terminal signal peptide occupies residues 1–23 (MKWMCSICCAAVLLAGGAAQAEA). The 182-residue stretch at 66-247 (KTIYLTFDNG…DLKKQGYTFK (182 aa)) folds into the NodB homology domain. D73 acts as the Proton acceptor in catalysis. A divalent metal cation contacts are provided by H124 and H128. The active-site Proton donor is H222.

This sequence belongs to the polysaccharide deacetylase family.

Its function is as follows. Catalyzes the deacetylation of N-acetylmuramic acid (MurNAc) residues in glycan strands of peptidoglycan, leading to the formation of muramic delta-lactam residues in spore cortex, after transpeptidation of deacetylated muramic acid residues. PdaA probably carries out both deacetylation and lactam ring formation and requires the product of CwlD activity on peptidoglycan as a substrate. Is required for germination. Cannot use chitin oligomer (hexa-N-acetylchitohexaose) as a substrate. In Bacillus subtilis (strain 168), this protein is Peptidoglycan-N-acetylmuramic acid deacetylase PdaA (pdaA).